A 90-amino-acid chain; its full sequence is Small ribosomal subunit protein bS16 (90 aa).

Belongs to the bacterial ribosomal protein bS16 family.

This chain is Small ribosomal subunit protein bS16, found in Streptococcus gordonii (strain Challis / ATCC 35105 / BCRC 15272 / CH1 / DL1 / V288).